A 1303-amino-acid polypeptide reads, in one-letter code: Serine/threonine-protein kinase ULK4 (1303 aa).

The Protein kinase domain occupies 4 to 280; it reads FVLYEEIGRG…WEGVLQHPFW (277 aa). D121 acts as the Proton acceptor in catalysis. 2 disordered regions span residues 304 to 332 and 369 to 401; these read ECSG…AHRL and TSAM…GHLS. Residues 384-400 are compositionally biased toward polar residues; the sequence is SSPQKTSPLSKMTSGHL. HEAT repeat units follow at residues 504–543, 727–765, 796–834, 926–964, 1025–1063, 1105–1143, and 1151–1189; these read RLLH…HTTE, LIQE…HNRD, NEYL…RKHP, STVM…LLVS, LVEE…NLVA, STLL…DTQA, and SKPL…LYGG.

The protein belongs to the protein kinase superfamily. Ser/Thr protein kinase family. APG1/unc-51/ULK1 subfamily. In terms of tissue distribution, expressed in embryonic and adult brain. In the brain, widely expressed, with highest levels in layers II/III and V of the cortex, piriform cortex, CA1-3 of hippocampus, dentate gyrus, ependymal cells lining the ventricles and choroid plexus, and in the thalamic reticular nucleus (at protein level).

It carries out the reaction L-seryl-[protein] + ATP = O-phospho-L-seryl-[protein] + ADP + H(+). It catalyses the reaction L-threonyl-[protein] + ATP = O-phospho-L-threonyl-[protein] + ADP + H(+). In terms of biological role, may be involved in the remodeling of cytoskeletal components, such as alpha-tubulin, and in this way regulates neurite branching and elongation, as well as cell motility. In Mus musculus (Mouse), this protein is Serine/threonine-protein kinase ULK4 (Ulk4).